The primary structure comprises 230 residues: Isoprenyl transferase (230 aa).

Residue Asp-14 is part of the active site. Asp-14 contacts Mg(2+). Substrate contacts are provided by residues 15–18 (GNGR), Trp-19, Arg-27, His-31, and 59–61 (STE). Residue Asn-62 is the Proton acceptor of the active site. Substrate contacts are provided by residues Trp-63, Arg-65, Arg-175, and 181–183 (RIS). Residue Glu-194 participates in Mg(2+) binding.

Belongs to the UPP synthase family. Homodimer. Requires Mg(2+) as cofactor.

Functionally, catalyzes the condensation of isopentenyl diphosphate (IPP) with allylic pyrophosphates generating different type of terpenoids. The polypeptide is Isoprenyl transferase (Fusobacterium nucleatum subsp. nucleatum (strain ATCC 25586 / DSM 15643 / BCRC 10681 / CIP 101130 / JCM 8532 / KCTC 2640 / LMG 13131 / VPI 4355)).